The primary structure comprises 176 residues: Dual-action ribosomal maturation protein DarP (176 aa).

Polar residues predominate over residues 1–10 (MTVPNHQQDI). The interval 1–22 (MTVPNHQQDISDSDLESRPSKT) is disordered.

Belongs to the DarP family.

It localises to the cytoplasm. In terms of biological role, member of a network of 50S ribosomal subunit biogenesis factors which assembles along the 30S-50S interface, preventing incorrect 23S rRNA structures from forming. Promotes peptidyl transferase center (PTC) maturation. This is Dual-action ribosomal maturation protein DarP from Nitrosomonas eutropha (strain DSM 101675 / C91 / Nm57).